We begin with the raw amino-acid sequence, 215 residues long: Probable transaldolase (215 aa).

Lysine 83 (schiff-base intermediate with substrate) is an active-site residue.

It belongs to the transaldolase family. Type 3B subfamily.

It is found in the cytoplasm. The catalysed reaction is D-sedoheptulose 7-phosphate + D-glyceraldehyde 3-phosphate = D-erythrose 4-phosphate + beta-D-fructose 6-phosphate. It functions in the pathway carbohydrate degradation; pentose phosphate pathway; D-glyceraldehyde 3-phosphate and beta-D-fructose 6-phosphate from D-ribose 5-phosphate and D-xylulose 5-phosphate (non-oxidative stage): step 2/3. Its function is as follows. Transaldolase is important for the balance of metabolites in the pentose-phosphate pathway. The protein is Probable transaldolase of Streptococcus agalactiae serotype III (strain NEM316).